Reading from the N-terminus, the 623-residue chain is MSKARSQDEVGWKRNESLCEYSMHRSRRPIQEKSIQSRAEHNFTLTRAYAINGSMTPDSSNLHHSSQVAVGRDAEGSANTLNTPFSEACFSQLISDGARSYLDFDFPDETIPGTSQAKNTEPDHQASGLQNQMSCDSLRNNTIMLDWLDLDYDGNLRQYSTAQLYGLLGADAHNGSAKCTLSLLPERMVADKAEAKLLLNHKMYGLTALCKNADRGSRRQQAVWEKVEVLLSSKHQTCVSDLLRKVDSSGEHQSLDLTSLPIEKLVQRAFRELGGLNLFIKEQDVTRIQERFLDPEKLPVDVSDMSLLITSLAWGALLDPEKLQRCYFARMVAFLCLAEKTGSDNLPALILGSISTAASLSLHLETALRKSCVSNDQAVQTKRAMWILYCIDKSYALRWQTFSLVGDGSLPTTNPPDTALPSEVATTLSLEWLRIRSQYSKICSNILQLGVGAEGEPSENRSNRAVVLSAALEEWYGSVEISQMMLSLEHSDAVHMKLQTSYHYYEARFQLLSISLPDPRSSSPTGSQECREVLRRSIREVITGSNTITSEYLLQDCNHLFIQTLALSMLALDILLESDQGCGKENRALLSIVAGFFARVDIILPQSSIFEEVSNLIEILTYR.

The interval 110-129 is disordered; it reads TIPGTSQAKNTEPDHQASGL.

The protein operates within mycotoxin biosynthesis. Functionally, part of the gene clusters that mediate the biosynthesis of AM-toxins, host-selective toxins (HSTs) causing Alternaria blotch on apple, a worldwide distributed disease. AM-toxins are cyclic depsipeptides containing the 3 residues 2-hydroxy-isovaleric acid (2-HIV), dehydroalanine, L-alanine which are common for all 3 AM-toxins I to III. The fourth precursor is L-alpha-amino-methoxyphenyl-valeric acid (L-Amv) for AM-toxin I, L-alpha-amino-phenyl-valeric acid (L-Apv) for AM-toxin II, and L-alpha-amino-hydroxyphenyl-valeric acid (L-Ahv) for AM-toxin III. AM-toxins have two target sites for affecting susceptible apple cells; they cause invagination of the plasma membrane and electrolyte loss and chloroplast disorganization. The non-ribosomal peptide synthetase AMT1 contains 4 catalytic modules and is responsible for activation of each residue in AM-toxin. The aldo-keto reductase AMT2 catalyzes the conversion of 2-keto-isovaleric acid (2-KIV) to 2-hydroxy-isovaleric acid (2-HIV), one of the precursor residues incorporated by AMT1 during AM-toxin biosynthesis, by reduction of its ketone to an alcohol. The cytochrome P450 monooxygenase AMT3 and the thioesterase AMT4 are also important for AM-toxin production, but their exact function within the AM-toxin biosynthesis are not known yet. Up to 21 proteins (including AMT1 to AMT4) are predicted to be involved in AM-toxin biosynthesis since their expression ishighly up-regulated in AM-toxin-producing cultures. This Alternaria alternata (Alternaria rot fungus) protein is AM-toxin biosynthesis protein 12-2.